We begin with the raw amino-acid sequence, 98 residues long: Large ribosomal subunit protein bL28 (98 aa).

Belongs to the bacterial ribosomal protein bL28 family.

The sequence is that of Large ribosomal subunit protein bL28 from Phenylobacterium zucineum (strain HLK1).